A 906-amino-acid chain; its full sequence is Protein translocase subunit SecA (906 aa).

Residues Gln-89, 107 to 111 (GEGKT), and Asp-502 each bind ATP. Zn(2+) contacts are provided by Cys-890, Cys-892, Cys-901, and His-902.

It belongs to the SecA family. As to quaternary structure, monomer and homodimer. Part of the essential Sec protein translocation apparatus which comprises SecA, SecYEG and auxiliary proteins SecDF-YajC and YidC. It depends on Zn(2+) as a cofactor.

Its subcellular location is the cell inner membrane. It localises to the cytoplasm. The catalysed reaction is ATP + H2O + cellular proteinSide 1 = ADP + phosphate + cellular proteinSide 2.. Its function is as follows. Part of the Sec protein translocase complex. Interacts with the SecYEG preprotein conducting channel. Has a central role in coupling the hydrolysis of ATP to the transfer of proteins into and across the cell membrane, serving both as a receptor for the preprotein-SecB complex and as an ATP-driven molecular motor driving the stepwise translocation of polypeptide chains across the membrane. The sequence is that of Protein translocase subunit SecA from Brucella suis biovar 1 (strain 1330).